A 288-amino-acid chain; its full sequence is Acetyl-coenzyme A carboxylase carboxyl transferase subunit beta (288 aa).

The 255-residue stretch at 34 to 288 (LFAKCPACKH…HLVAFHGGVS (255 aa)) folds into the CoA carboxyltransferase N-terminal domain. Zn(2+)-binding residues include Cys38, Cys41, Cys56, and Cys59. The C4-type zinc finger occupies 38 to 59 (CPACKHMIYQKDLGPAKICPTC).

It belongs to the AccD/PCCB family. As to quaternary structure, acetyl-CoA carboxylase is a heterohexamer composed of biotin carboxyl carrier protein (AccB), biotin carboxylase (AccC) and two subunits each of ACCase subunit alpha (AccA) and ACCase subunit beta (AccD). Requires Zn(2+) as cofactor.

It is found in the cytoplasm. The catalysed reaction is N(6)-carboxybiotinyl-L-lysyl-[protein] + acetyl-CoA = N(6)-biotinyl-L-lysyl-[protein] + malonyl-CoA. It participates in lipid metabolism; malonyl-CoA biosynthesis; malonyl-CoA from acetyl-CoA: step 1/1. In terms of biological role, component of the acetyl coenzyme A carboxylase (ACC) complex. Biotin carboxylase (BC) catalyzes the carboxylation of biotin on its carrier protein (BCCP) and then the CO(2) group is transferred by the transcarboxylase to acetyl-CoA to form malonyl-CoA. The protein is Acetyl-coenzyme A carboxylase carboxyl transferase subunit beta of Streptococcus equi subsp. zooepidemicus (strain H70).